The chain runs to 1049 residues: Exotoxin PaxA (1049 aa).

Transmembrane regions (helical) follow at residues glycine 246–alanine 266, glycine 311–leucine 331, isoleucine 375–glycine 395, and leucine 397–leucine 417. Hemolysin-type calcium-binding repeat units follow at residues lysine 744–leucine 761, asparagine 762–leucine 779, arginine 780–leucine 797, phenylalanine 798–leucine 815, arginine 826–leucine 843, and aspartate 844–tyrosine 861.

It belongs to the RTX prokaryotic toxin (TC 1.C.11) family.

The protein resides in the secreted. It localises to the host cell membrane. In terms of biological role, paxA is associated with abortion cases in swine and septicemia in young piglets. Shows cohemolytic activity with the sphingomyelinase of S.aureus but is devoid of direct hemolytic activity. This is Exotoxin PaxA (paxA) from Pasteurella aerogenes.